The following is a 203-amino-acid chain: Small ribosomal subunit protein uS4 (203 aa).

Positions 93–154 (CRFDNVVFRA…KSRNMDAVRN (62 aa)) constitute an S4 RNA-binding domain.

Belongs to the universal ribosomal protein uS4 family. In terms of assembly, part of the 30S ribosomal subunit. Contacts protein S5. The interaction surface between S4 and S5 is involved in control of translational fidelity.

Its function is as follows. One of the primary rRNA binding proteins, it binds directly to 16S rRNA where it nucleates assembly of the body of the 30S subunit. With S5 and S12 plays an important role in translational accuracy. This Chloroherpeton thalassium (strain ATCC 35110 / GB-78) protein is Small ribosomal subunit protein uS4.